We begin with the raw amino-acid sequence, 383 residues long: Acetylornithine deacetylase (383 aa).

His-80 contacts Zn(2+). Asp-82 is an active-site residue. Asp-112 serves as a coordination point for Zn(2+). Glu-144 is a catalytic residue. Residues Glu-145, Glu-169, and His-355 each coordinate Zn(2+).

The protein belongs to the peptidase M20A family. ArgE subfamily. In terms of assembly, homodimer. The cofactor is Zn(2+). Co(2+) is required as a cofactor. It depends on glutathione as a cofactor.

The protein resides in the cytoplasm. It carries out the reaction N(2)-acetyl-L-ornithine + H2O = L-ornithine + acetate. It functions in the pathway amino-acid biosynthesis; L-arginine biosynthesis; L-ornithine from N(2)-acetyl-L-ornithine (linear): step 1/1. Its function is as follows. Catalyzes the hydrolysis of the amide bond of N(2)-acetylated L-amino acids. Cleaves the acetyl group from N-acetyl-L-ornithine to form L-ornithine, an intermediate in L-arginine biosynthesis pathway, and a branchpoint in the synthesis of polyamines. This is Acetylornithine deacetylase from Escherichia coli O17:K52:H18 (strain UMN026 / ExPEC).